The chain runs to 556 residues: Formate--tetrahydrofolate ligase (556 aa).

65 to 72 (TPAGEGKS) serves as a coordination point for ATP.

It belongs to the formate--tetrahydrofolate ligase family.

The catalysed reaction is (6S)-5,6,7,8-tetrahydrofolate + formate + ATP = (6R)-10-formyltetrahydrofolate + ADP + phosphate. Its pathway is one-carbon metabolism; tetrahydrofolate interconversion. This Streptococcus suis (strain 98HAH33) protein is Formate--tetrahydrofolate ligase.